We begin with the raw amino-acid sequence, 946 residues long: Bifunctional glutamine synthetase adenylyltransferase/adenylyl-removing enzyme (946 aa).

Positions 1–440 are adenylyl removase; that stretch reads MKPLSSPLQQ…VFNELIGDDE (440 aa). The segment at 449-946 is adenylyl transferase; the sequence is SEQWRELWQD…ASWQKWLVEE (498 aa).

The protein belongs to the GlnE family. Mg(2+) is required as a cofactor.

It catalyses the reaction [glutamine synthetase]-O(4)-(5'-adenylyl)-L-tyrosine + phosphate = [glutamine synthetase]-L-tyrosine + ADP. The catalysed reaction is [glutamine synthetase]-L-tyrosine + ATP = [glutamine synthetase]-O(4)-(5'-adenylyl)-L-tyrosine + diphosphate. Functionally, involved in the regulation of glutamine synthetase GlnA, a key enzyme in the process to assimilate ammonia. When cellular nitrogen levels are high, the C-terminal adenylyl transferase (AT) inactivates GlnA by covalent transfer of an adenylyl group from ATP to specific tyrosine residue of GlnA, thus reducing its activity. Conversely, when nitrogen levels are low, the N-terminal adenylyl removase (AR) activates GlnA by removing the adenylyl group by phosphorolysis, increasing its activity. The regulatory region of GlnE binds the signal transduction protein PII (GlnB) which indicates the nitrogen status of the cell. The sequence is that of Bifunctional glutamine synthetase adenylyltransferase/adenylyl-removing enzyme from Escherichia coli (strain SE11).